Reading from the N-terminus, the 167-residue chain is MHTPKHAIRRMSKGEMEFFEGRCQRMGEAERTVWGTKWCGSGNEATSGIDLGYFKNLDSCCRTHDHCDNIPAGETKYGLTNEGIYTMMNCKCESVFKQCLKDVTGVFEGPAAAAVRKIYFDLYGNGCYSVQCPAGGRSARTGGCPNGVATYTGETGYGAWLLNKANG.

Positions 38, 40, and 42 each coordinate Ca(2+). Cystine bridges form between cysteine 39/cysteine 61, cysteine 60/cysteine 99, cysteine 67/cysteine 92, cysteine 90/cysteine 127, and cysteine 132/cysteine 144. The active site involves histidine 64. Aspartate 65 serves as a coordination point for Ca(2+). A propeptide spanning residues 136–140 (GRSAR) is cleaved from the precursor.

The protein belongs to the phospholipase A2 family. Group III subfamily. As to quaternary structure, heterodimer composed of a large and a small subunits; disulfide-linked. It depends on Ca(2+) as a cofactor. In terms of tissue distribution, expressed by the venom gland.

It localises to the secreted. The catalysed reaction is a 1,2-diacyl-sn-glycero-3-phosphocholine + H2O = a 1-acyl-sn-glycero-3-phosphocholine + a fatty acid + H(+). Functionally, phospholipase toxin, which catalyzes the calcium-dependent hydrolysis of the 2-acyl groups in 3-sn-phosphoglycerides. Inhibits both skeletal (RYR1) and cardiac (RYR2) ryanodine receptors (calcium release channels). Probably blocks ryanodine receptors by generating a lipid product. The sequence is that of Phospholipase A2 heteromtoxin from Heterometrus laoticus (Thai giant scorpion).